Here is a 297-residue protein sequence, read N- to C-terminus: Acetylglutamate kinase (297 aa).

Substrate is bound by residues 72–73, Arg-94, and Asn-193; that span reads GG.

This sequence belongs to the acetylglutamate kinase family. ArgB subfamily.

The protein resides in the cytoplasm. The enzyme catalyses N-acetyl-L-glutamate + ATP = N-acetyl-L-glutamyl 5-phosphate + ADP. It functions in the pathway amino-acid biosynthesis; L-arginine biosynthesis; N(2)-acetyl-L-ornithine from L-glutamate: step 2/4. In terms of biological role, catalyzes the ATP-dependent phosphorylation of N-acetyl-L-glutamate. The polypeptide is Acetylglutamate kinase (Mycobacterium leprae (strain TN)).